Reading from the N-terminus, the 27-residue chain is Voltage-dependent anion-selective channel protein (27 aa).

This sequence belongs to the eukaryotic mitochondrial porin family. As to quaternary structure, interacts with hexokinases. As to expression, photoreceptors.

It localises to the mitochondrion outer membrane. In terms of biological role, forms a channel through the cell membrane that allows diffusion of small hydrophilic molecules. The polypeptide is Voltage-dependent anion-selective channel protein (Doryteuthis pealeii (Longfin inshore squid)).